The following is a 139-amino-acid chain: Small ribosomal subunit protein uS12 (139 aa).

Residue aspartate 102 is modified to 3-methylthioaspartic acid.

This sequence belongs to the universal ribosomal protein uS12 family. As to quaternary structure, part of the 30S ribosomal subunit. Contacts proteins S8 and S17. May interact with IF1 in the 30S initiation complex.

In terms of biological role, with S4 and S5 plays an important role in translational accuracy. Its function is as follows. Interacts with and stabilizes bases of the 16S rRNA that are involved in tRNA selection in the A site and with the mRNA backbone. Located at the interface of the 30S and 50S subunits, it traverses the body of the 30S subunit contacting proteins on the other side and probably holding the rRNA structure together. The combined cluster of proteins S8, S12 and S17 appears to hold together the shoulder and platform of the 30S subunit. The chain is Small ribosomal subunit protein uS12 from Phytoplasma australiense.